Here is a 465-residue protein sequence, read N- to C-terminus: MKTNPLPATPSVWGGSTVELPPTTRDTAGQGLLRRVLRPPISRRDGPVLPRGSGPRRAASTLWLLGLDGTDAPPGALTPNDDTEQALDKILRGTMRGGAALIGSPRHHLTRQVILTDLCQPNADRAGTLLLALRHPADLPHLAHQRAPPGRQTERLGEAWGQLMEATALGSGRAESGCTRAGLVSFNFLVAACAASYDARDAADAVRAHVTANYRGTRVGARLDRFSECLRAMVHTHVFPHEVMRFFGGLVSWVTQDELASVTAVCAGPQEAAHTGHPGRPRSAVILPACAFVDLDAELGLGGPGAAFLYLVLTYRQRRDQELCCVYVIKSQLPPRGLEPALERLFGRLRITNTIHGTEDMTPPAPNRNPDFPLAGLAANPQTPRCSAGQVTNPQFADRLYRWQPDLRGRPTARTCTYAAFAELGMMPEDSPRCLHRTERFGAVTVPVVILEGVVWCPGEWRACA.

It belongs to the herpesviridae TRX1 protein family. Interacts with TRX2, MCP and capsid vertex component 2/CVC2.

Its subcellular location is the virion. It is found in the host nucleus. Structural component of the T=16 icosahedral capsid. The capsid is composed of pentamers and hexamers of major capsid protein/MCP, which are linked together by heterotrimers called triplexes. These triplexes are formed by a single molecule of triplex protein 1/TRX1 and two copies of triplex protein 2/TRX2. Additionally, TRX1 is required for efficient transport of TRX2 to the nucleus, which is the site of capsid assembly. This is Triplex capsid protein 1 from Homo sapiens (Human).